The chain runs to 179 residues: Large ribosomal subunit protein uL5 (179 aa).

The protein belongs to the universal ribosomal protein uL5 family. In terms of assembly, part of the 50S ribosomal subunit; part of the 5S rRNA/L5/L18/L25 subcomplex. Contacts the 5S rRNA and the P site tRNA. Forms a bridge to the 30S subunit in the 70S ribosome.

Its function is as follows. This is one of the proteins that bind and probably mediate the attachment of the 5S RNA into the large ribosomal subunit, where it forms part of the central protuberance. In the 70S ribosome it contacts protein S13 of the 30S subunit (bridge B1b), connecting the 2 subunits; this bridge is implicated in subunit movement. Contacts the P site tRNA; the 5S rRNA and some of its associated proteins might help stabilize positioning of ribosome-bound tRNAs. In Synechococcus sp. (strain CC9311), this protein is Large ribosomal subunit protein uL5.